An 85-amino-acid polypeptide reads, in one-letter code: Small ribosomal subunit protein uS17 (85 aa).

Belongs to the universal ribosomal protein uS17 family. As to quaternary structure, part of the 30S ribosomal subunit.

In terms of biological role, one of the primary rRNA binding proteins, it binds specifically to the 5'-end of 16S ribosomal RNA. The protein is Small ribosomal subunit protein uS17 of Natranaerobius thermophilus (strain ATCC BAA-1301 / DSM 18059 / JW/NM-WN-LF).